Here is an 800-residue protein sequence, read N- to C-terminus: Structural protein ORF800 (800 aa).

4 coiled-coil regions span residues 98–130 (AENIVEYLKEEEKVKELLNKLNDALSQADYNLA), 447–475 (LLAEANNLIDQANAVITQVNNMMNNANNL), 514–567 (AINQ…ANNL), and 606–633 (AINQDSVNQVEENIQNIQNTITEFNLLA). Residues 759–800 (AESIAESESETTESENNETTESTANSEGEKQEGEHGARLIRV) form a disordered region. Over residues 761-776 (SIAESESETTESENNE) the composition is skewed to acidic residues. Positions 785-800 (EGEKQEGEHGARLIRV) are enriched in basic and acidic residues.

The protein resides in the virion. In Acidianus convivator (ATV), this protein is Structural protein ORF800.